The primary structure comprises 585 residues: Proline--tRNA ligase (585 aa).

Belongs to the class-II aminoacyl-tRNA synthetase family. ProS type 1 subfamily. Homodimer.

It is found in the cytoplasm. The enzyme catalyses tRNA(Pro) + L-proline + ATP = L-prolyl-tRNA(Pro) + AMP + diphosphate. Its function is as follows. Catalyzes the attachment of proline to tRNA(Pro) in a two-step reaction: proline is first activated by ATP to form Pro-AMP and then transferred to the acceptor end of tRNA(Pro). As ProRS can inadvertently accommodate and process non-cognate amino acids such as alanine and cysteine, to avoid such errors it has two additional distinct editing activities against alanine. One activity is designated as 'pretransfer' editing and involves the tRNA(Pro)-independent hydrolysis of activated Ala-AMP. The other activity is designated 'posttransfer' editing and involves deacylation of mischarged Ala-tRNA(Pro). The misacylated Cys-tRNA(Pro) is not edited by ProRS. This chain is Proline--tRNA ligase, found in Cutibacterium acnes (strain DSM 16379 / KPA171202) (Propionibacterium acnes).